The primary structure comprises 157 residues: Dihydrofolate reductase type 5 (157 aa).

The region spanning 2 to 156 is the DHFR domain; it reads KVSLMAAKAK…INYCYQIWQK (155 aa).

Belongs to the dihydrofolate reductase family. In terms of assembly, homodimer.

The catalysed reaction is (6S)-5,6,7,8-tetrahydrofolate + NADP(+) = 7,8-dihydrofolate + NADPH + H(+). It functions in the pathway cofactor biosynthesis; tetrahydrofolate biosynthesis; 5,6,7,8-tetrahydrofolate from 7,8-dihydrofolate: step 1/1. Its function is as follows. Key enzyme in folate metabolism. Catalyzes an essential reaction for de novo glycine and purine synthesis, and for DNA precursor synthesis. This is Dihydrofolate reductase type 5 (dhfrV) from Escherichia coli.